A 511-amino-acid polypeptide reads, in one-letter code: Cytochrome P450 monooxyhenase eriC (511 aa).

The chain crosses the membrane as a helical span at residues 2-22 (VLADFISIPTVSIACLAVLGI). Cys445 provides a ligand contact to heme.

The protein belongs to the cytochrome P450 family. It depends on heme as a cofactor.

The protein resides in the membrane. It catalyses the reaction erinacol + reduced [NADPH--hemoprotein reductase] + O2 = cyathadiol + oxidized [NADPH--hemoprotein reductase] + H2O + H(+). The protein operates within secondary metabolite biosynthesis. Functionally, cytochrome P450 monooxygenase; part of the gene cluster that mediates the biosynthesis of erinacines, cyathane-xylosides that show unique biological activities, including leishmanicidal activity, stimulating activity for nerve growth-factor synthesis, and agonistic activity toward the kappa opioid receptor. Within the pathway, eriC hydroxylates erinacol at C-15 of the seven-membered ring to yield cyathadiol. The first step of the erinacines biosynthesis pathway is catalyzed by the geranylgeranyl diphosphate (GGPP) synthase eriE via conversion of farnesyl pyrophosphate and isopentyl pyrophosphate into geranylgeranyl pyrophosphate (GGPP). GGPP is then substrate of the diterpene cyclase eriG for the production of cyatha-3,12-diene. The cytochrome P450 monooxygenase eriI then hydroxylates cyatha-3,12-diene at C-14 of the seven-membered ring to produce erinacol, which is further hydroxylated at C-15 by the cytochrome P450 monooxygenase eriC to yield cyathadiol. The cytochrome P450 monooxygenase eriA then catalyzes C-11 hydroxylation in the presence of the short chain dehydrogenase/reductase (SDR) eriH, which leads to the production of cyathatriol. The acetyltransferase eriL converts cyathatriol into 11-O-acetyl-cyathatriol. The SDR eriH catalyzes further oxidation of 11-O-acetyl-cyathatriol into 1-O-acetylcyathin A3. Finally, the glycosyl transferase eriJ tranfers xylose from UDP-xylose onto C-14 of 11-O-acetyl-cyathatriol to form eracine Q. EriJ is also able to convert 11-O-acetyl-cyathatriol to eracine Q2 by using UDP-D-glucose as cosubstrate, but at a lower rate. This is Cytochrome P450 monooxyhenase eriC from Hericium erinaceus (Lion's mane mushroom).